Consider the following 337-residue polypeptide: Anthranilate phosphoribosyltransferase (337 aa).

Residues Gly82, 85–86, Thr90, 92–95, 110–118, and Ser122 each bind 5-phospho-alpha-D-ribose 1-diphosphate; these read GD, NIST, and KHGGRSVSS. Residue Gly82 participates in anthranilate binding. Residue Ser94 coordinates Mg(2+). Position 168 (Arg168) interacts with anthranilate. Residues Asp226 and Glu227 each contribute to the Mg(2+) site.

Belongs to the anthranilate phosphoribosyltransferase family. In terms of assembly, homodimer. Mg(2+) serves as cofactor.

The catalysed reaction is N-(5-phospho-beta-D-ribosyl)anthranilate + diphosphate = 5-phospho-alpha-D-ribose 1-diphosphate + anthranilate. Its pathway is amino-acid biosynthesis; L-tryptophan biosynthesis; L-tryptophan from chorismate: step 2/5. Catalyzes the transfer of the phosphoribosyl group of 5-phosphorylribose-1-pyrophosphate (PRPP) to anthranilate to yield N-(5'-phosphoribosyl)-anthranilate (PRA). In Francisella tularensis subsp. holarctica (strain OSU18), this protein is Anthranilate phosphoribosyltransferase.